The chain runs to 442 residues: tRNA-2-methylthio-N(6)-dimethylallyladenosine synthase (442 aa).

An MTTase N-terminal domain is found at 5–122; the sequence is KRIFIKTFGC…LPDMIESKRR (118 aa). Residues Cys-14, Cys-51, Cys-85, Cys-159, Cys-163, and Cys-166 each coordinate [4Fe-4S] cluster. The Radical SAM core domain occupies 145-377; it reads RVEGAAAFLS…QALNEAQGKA (233 aa). One can recognise a TRAM domain in the interval 380-442; sequence ASMVGSIQRV…LSHTLRGELV (63 aa).

The protein belongs to the methylthiotransferase family. MiaB subfamily. As to quaternary structure, monomer. It depends on [4Fe-4S] cluster as a cofactor.

It is found in the cytoplasm. The enzyme catalyses N(6)-dimethylallyladenosine(37) in tRNA + (sulfur carrier)-SH + AH2 + 2 S-adenosyl-L-methionine = 2-methylsulfanyl-N(6)-dimethylallyladenosine(37) in tRNA + (sulfur carrier)-H + 5'-deoxyadenosine + L-methionine + A + S-adenosyl-L-homocysteine + 2 H(+). Its function is as follows. Catalyzes the methylthiolation of N6-(dimethylallyl)adenosine (i(6)A), leading to the formation of 2-methylthio-N6-(dimethylallyl)adenosine (ms(2)i(6)A) at position 37 in tRNAs that read codons beginning with uridine. The chain is tRNA-2-methylthio-N(6)-dimethylallyladenosine synthase from Methylobacillus flagellatus (strain ATCC 51484 / DSM 6875 / VKM B-1610 / KT).